We begin with the raw amino-acid sequence, 424 residues long: Transcription regulator spe-44 (424 aa).

One can recognise an SAND domain in the interval 65-150; it reads PLQITIPEGD…RTHMEAMTID (86 aa). Disordered stretches follow at residues 178 to 228 and 371 to 394; these read ARKS…KPRQ and EHSV…AREF. A compositionally biased stretch (basic and acidic residues) spans 192–210; it reads YEIENEMAGKEADNDDNRK. Over residues 378–388 the composition is skewed to polar residues; sequence PRTSSSSQESL.

It is found in the chromosome. The protein localises to the nucleus. Functionally, transcription factor which controls spermatogenesis and sperm cell fate by regulation of sperm gene expression. This chain is Transcription regulator spe-44, found in Caenorhabditis elegans.